A 310-amino-acid polypeptide reads, in one-letter code: Glutaminase 1 (310 aa).

Positions 66, 117, 161, 168, 192, 244, and 262 each coordinate substrate. At Lys-294 the chain carries N6-acetyllysine.

This sequence belongs to the glutaminase family. Homotetramer.

It catalyses the reaction L-glutamine + H2O = L-glutamate + NH4(+). The polypeptide is Glutaminase 1 (Escherichia coli O6:H1 (strain CFT073 / ATCC 700928 / UPEC)).